Here is a 232-residue protein sequence, read N- to C-terminus: Chalcone synthase (232 aa).

The active site involves cysteine 7.

It belongs to the thiolase-like superfamily. Chalcone/stilbene synthases family.

It catalyses the reaction (E)-4-coumaroyl-CoA + 3 malonyl-CoA + 3 H(+) = 2',4,4',6'-tetrahydroxychalcone + 3 CO2 + 4 CoA. It functions in the pathway secondary metabolite biosynthesis; flavonoid biosynthesis. Its function is as follows. The primary product of this enzyme is 4,2',4',6'-tetrahydroxychalcone (also termed naringenin-chalcone or chalcone) which can under specific conditions spontaneously isomerize into naringenin. This chain is Chalcone synthase (CHS), found in Malus domestica (Apple).